The sequence spans 663 residues: Transketolase 2 (663 aa).

His25 contacts substrate. Residues His65 and 113-115 each bind thiamine diphosphate; that span reads GPL. Residue Asp154 coordinates Mg(2+). Thiamine diphosphate-binding residues include Gly155 and Asn184. Mg(2+) contacts are provided by Asn184 and Ile186. His259, Arg356, and Ser383 together coordinate substrate. His259 is a thiamine diphosphate binding site. Glu410 (proton donor) is an active-site residue. Thiamine diphosphate is bound at residue Phe436. Residues His460, Asp468, and Arg519 each coordinate substrate.

The protein belongs to the transketolase family. Homodimer. The cofactor is Mg(2+). Ca(2+) serves as cofactor. It depends on Mn(2+) as a cofactor. Requires Co(2+) as cofactor. Thiamine diphosphate is required as a cofactor.

It catalyses the reaction D-sedoheptulose 7-phosphate + D-glyceraldehyde 3-phosphate = aldehydo-D-ribose 5-phosphate + D-xylulose 5-phosphate. Catalyzes the transfer of a two-carbon ketol group from a ketose donor to an aldose acceptor, via a covalent intermediate with the cofactor thiamine pyrophosphate. The protein is Transketolase 2 (tkt2) of Vibrio vulnificus (strain CMCP6).